A 261-amino-acid chain; its full sequence is Chanoclavine-I dehydrogenase easD (261 aa).

A signal peptide spans 1–20 (MPSMTSKVFAITGGASGIGA). Ile-18 contributes to the NADP(+) binding site. Residue Asn-43 is glycosylated (N-linked (GlcNAc...) asparagine). NADP(+) is bound by residues Asp-66, Arg-132, Tyr-166, Lys-170, and Thr-201. Tyr-166 functions as the Proton donor in the catalytic mechanism. The active-site Lowers pKa of active site Tyr is the Lys-170.

The protein belongs to the short-chain dehydrogenases/reductases (SDR) family. Homotetramer.

It carries out the reaction chanoclavine-I + NAD(+) = chanoclavine-I aldehyde + NADH + H(+). Its pathway is alkaloid biosynthesis; ergot alkaloid biosynthesis. In terms of biological role, chanoclavine-I dehydrogenase; part of the gene cluster that mediates the biosynthesis of fungal ergot alkaloid. DmaW catalyzes the first step of ergot alkaloid biosynthesis by condensing dimethylallyl diphosphate (DMAP) and tryptophan to form 4-dimethylallyl-L-tryptophan. The second step is catalyzed by the methyltransferase easF that methylates 4-dimethylallyl-L-tryptophan in the presence of S-adenosyl-L-methionine, resulting in the formation of 4-dimethylallyl-L-abrine. The catalase easC and the FAD-dependent oxidoreductase easE then transform 4-dimethylallyl-L-abrine to chanoclavine-I which is further oxidized by easD in the presence of NAD(+), resulting in the formation of chanoclavine-I aldehyde. Agroclavine dehydrogenase easG then mediates the conversion of chanoclavine-I aldehyde to agroclavine via a non-enzymatic adduct reaction: the substrate is an iminium intermediate that is formed spontaneously from chanoclavine-I aldehyde in the presence of glutathione. The presence of easA is not required to complete this reaction. Further conversion of agroclavine to paspalic acid is a two-step process involving oxidation of agroclavine to elymoclavine and of elymoclavine to paspalic acid, the second step being performed by the elymoclavine oxidase cloA. Paspalic acid is then further converted to D-lysergic acid. Ergopeptines are assembled from D-lysergic acid and three different amino acids by the D-lysergyl-peptide-synthetases composed each of a monomudular and a trimodular nonribosomal peptide synthetase subunit. LpsB and lpsC encode the monomodular subunits responsible for D-lysergic acid activation and incorporation into the ergopeptine backbone. LpsA1 and A2 subunits encode the trimodular nonribosomal peptide synthetase assembling the tripeptide portion of ergopeptines. LpsA1 is responsible for formation of the major ergopeptine, ergotamine, and lpsA2 for alpha-ergocryptine, the minor ergopeptine of the total alkaloid mixture elaborated by C.purpurea. D-lysergyl-tripeptides are assembled by the nonribosomal peptide synthetases and released as N-(D-lysergyl-aminoacyl)-lactams. Cyclolization of the D-lysergyl-tripeptides is performed by the Fe(2+)/2-ketoglutarate-dependent dioxygenase easH which introduces a hydroxyl group into N-(D-lysergyl-aminoacyl)-lactam at alpha-C of the aminoacyl residue followed by spontaneous condensation with the terminal lactam carbonyl group. The polypeptide is Chanoclavine-I dehydrogenase easD (Claviceps purpurea (strain 20.1) (Ergot fungus)).